A 578-amino-acid chain; its full sequence is Membrane protein insertase YidC (578 aa).

Residues 3–23 (IQRSILIVALAVVSYLLVLQW) traverse the membrane as a helical segment. Positions 34–72 (AASASMNTTQGLPDTPSASGTSSDVPTAQSSAAGSEAAD) are disordered. Residues 37–66 (ASMNTTQGLPDTPSASGTSSDVPTAQSSAA) show a composition bias toward polar residues. A run of 5 helical transmembrane segments spans residues 361 to 381 (LELT…FWLL), 387 to 407 (LIGN…LAFF), 457 to 477 (LGGC…YWVL), 500 to 520 (PFFI…MLNP), and 535 to 555 (PIIF…YWVV).

The protein belongs to the OXA1/ALB3/YidC family. Type 1 subfamily. As to quaternary structure, interacts with the Sec translocase complex via SecD. Specifically interacts with transmembrane segments of nascent integral membrane proteins during membrane integration.

It localises to the cell inner membrane. Functionally, required for the insertion and/or proper folding and/or complex formation of integral membrane proteins into the membrane. Involved in integration of membrane proteins that insert both dependently and independently of the Sec translocase complex, as well as at least some lipoproteins. Aids folding of multispanning membrane proteins. This Pseudomonas aeruginosa (strain LESB58) protein is Membrane protein insertase YidC.